The following is a 350-amino-acid chain: Putative [LysW]-lysine/[LysW]-ornithine hydrolase (350 aa).

Histidine 72 is a binding site for Zn(2+). Residue aspartate 74 is part of the active site. Aspartate 96 provides a ligand contact to Zn(2+). The active-site Proton acceptor is the glutamate 128. Zn(2+) contacts are provided by glutamate 129, glutamate 152, and histidine 321.

Belongs to the peptidase M20A family. LysK subfamily. Zn(2+) is required as a cofactor. It depends on Co(2+) as a cofactor.

It localises to the cytoplasm. The catalysed reaction is [amino-group carrier protein]-C-terminal-gamma-(L-lysyl)-L-glutamate + H2O = [amino-group carrier protein]-C-terminal-L-glutamate + L-lysine. It catalyses the reaction [amino-group carrier protein]-C-terminal-gamma-(L-ornithyl)-L-glutamate + H2O = [amino-group carrier protein]-C-terminal-L-glutamate + L-ornithine. It participates in amino-acid biosynthesis; L-lysine biosynthesis via AAA pathway; L-lysine from L-alpha-aminoadipate (Thermus route): step 5/5. It functions in the pathway amino-acid biosynthesis; L-arginine biosynthesis. In terms of biological role, catalyzes the release of L-lysine from [LysW]-gamma-L-lysine and the release of L-ornithine from [LysW]-L-ornithine. This chain is Putative [LysW]-lysine/[LysW]-ornithine hydrolase, found in Aeropyrum pernix (strain ATCC 700893 / DSM 11879 / JCM 9820 / NBRC 100138 / K1).